The sequence spans 217 residues: Probable cytidylate kinase (217 aa).

Glycine 9–threonine 17 contacts ATP.

Belongs to the cytidylate kinase family. Type 1 subfamily.

It catalyses the reaction CMP + ATP = CDP + ADP. The enzyme catalyses dCMP + ATP = dCDP + ADP. The sequence is that of Probable cytidylate kinase from Vairimorpha ceranae (strain BRL01) (Microsporidian parasite).